The following is a 215-amino-acid chain: Cytochrome b6 (215 aa).

Residues isoleucine 32 to phenylalanine 52 traverse the membrane as a helical segment. Position 35 (cysteine 35) interacts with heme c. Heme b-binding residues include histidine 86 and histidine 100. 3 helical membrane-spanning segments follow: residues alanine 90–phenylalanine 110, leucine 116–tyrosine 136, and leucine 186–isoleucine 206. 2 residues coordinate heme b: histidine 187 and histidine 202.

The protein belongs to the cytochrome b family. PetB subfamily. In terms of assembly, the 4 large subunits of the cytochrome b6-f complex are cytochrome b6, subunit IV (17 kDa polypeptide, PetD), cytochrome f and the Rieske protein, while the 4 small subunits are PetG, PetL, PetM and PetN. The complex functions as a dimer. It depends on heme b as a cofactor. Heme c serves as cofactor.

The protein localises to the plastid. The protein resides in the chloroplast thylakoid membrane. In terms of biological role, component of the cytochrome b6-f complex, which mediates electron transfer between photosystem II (PSII) and photosystem I (PSI), cyclic electron flow around PSI, and state transitions. This is Cytochrome b6 from Huperzia lucidula (Shining clubmoss).